We begin with the raw amino-acid sequence, 177 residues long: Peptide methionine sulfoxide reductase MsrA (177 aa).

Residue cysteine 15 is part of the active site.

It belongs to the MsrA Met sulfoxide reductase family.

It catalyses the reaction L-methionyl-[protein] + [thioredoxin]-disulfide + H2O = L-methionyl-(S)-S-oxide-[protein] + [thioredoxin]-dithiol. The enzyme catalyses [thioredoxin]-disulfide + L-methionine + H2O = L-methionine (S)-S-oxide + [thioredoxin]-dithiol. Functionally, has an important function as a repair enzyme for proteins that have been inactivated by oxidation. Catalyzes the reversible oxidation-reduction of methionine sulfoxide in proteins to methionine. This is Peptide methionine sulfoxide reductase MsrA from Mycobacterium leprae (strain Br4923).